The sequence spans 558 residues: Potassium-transporting ATPase potassium-binding subunit 1 (558 aa).

Transmembrane regions (helical) follow at residues 1 to 21 (MEIILFLTMMVMITYVFSGYL), 66 to 86 (FNGFMGFITFVLLIVQQWLFL), 127 to 147 (MIVMTYLMFTSSASGYAVCIA), 166 to 186 (IVRFIVRVLLPLSCLISILLM), 245 to 265 (IWSNFIEMGSMMLLPMSMLFL), 281 to 301 (ALILFVAMFFIFIAILTLTMW), 327 to 347 (FGAGLSALFTVITTAFTTGSV), 354 to 374 (LTPIGGLGPMVLMMLNVVFGG), 377 to 397 (VGLMNLLIFVLLTVFICSLMV), 416 to 436 (IVLVFLIHPILILVFSALAFM), 482 to 502 (ISTGIIMLLSRYIPIILQLMI), and 531 to 551 (IVFIVLLSGLTFIPVLLLGPI).

This sequence belongs to the KdpA family. The system is composed of three essential subunits: KdpA, KdpB and KdpC.

The protein localises to the cell membrane. Part of the high-affinity ATP-driven potassium transport (or Kdp) system, which catalyzes the hydrolysis of ATP coupled with the electrogenic transport of potassium into the cytoplasm. This subunit binds the extracellular potassium ions and delivers the ions to the membrane domain of KdpB through an intramembrane tunnel. This is Potassium-transporting ATPase potassium-binding subunit 1 from Staphylococcus aureus (strain Mu50 / ATCC 700699).